A 485-amino-acid chain; its full sequence is Glutamyl-tRNA(Gln) amidotransferase subunit A (485 aa).

Catalysis depends on charge relay system residues lysine 79 and serine 154. Serine 178 serves as the catalytic Acyl-ester intermediate.

It belongs to the amidase family. GatA subfamily. Heterotrimer of A, B and C subunits.

The catalysed reaction is L-glutamyl-tRNA(Gln) + L-glutamine + ATP + H2O = L-glutaminyl-tRNA(Gln) + L-glutamate + ADP + phosphate + H(+). In terms of biological role, allows the formation of correctly charged Gln-tRNA(Gln) through the transamidation of misacylated Glu-tRNA(Gln) in organisms which lack glutaminyl-tRNA synthetase. The reaction takes place in the presence of glutamine and ATP through an activated gamma-phospho-Glu-tRNA(Gln). The protein is Glutamyl-tRNA(Gln) amidotransferase subunit A of Clostridium botulinum (strain Alaska E43 / Type E3).